Consider the following 459-residue polypeptide: tRNA modification GTPase MnmE (459 aa).

(6S)-5-formyl-5,6,7,8-tetrahydrofolate contacts are provided by arginine 22, glutamate 85, and arginine 124. The 160-residue stretch at 221–380 (GLSTVIVGRP…LEIQIKDLFF (160 aa)) folds into the TrmE-type G domain. A K(+)-binding site is contributed by asparagine 231. Residues 231-236 (NVGKSS), 250-256 (TEVAGTT), and 275-278 (DTAG) contribute to the GTP site. Position 235 (serine 235) interacts with Mg(2+). Positions 250, 252, and 255 each coordinate K(+). Threonine 256 serves as a coordination point for Mg(2+). Residue lysine 459 participates in (6S)-5-formyl-5,6,7,8-tetrahydrofolate binding.

This sequence belongs to the TRAFAC class TrmE-Era-EngA-EngB-Septin-like GTPase superfamily. TrmE GTPase family. In terms of assembly, homodimer. Heterotetramer of two MnmE and two MnmG subunits. It depends on K(+) as a cofactor.

Its subcellular location is the cytoplasm. In terms of biological role, exhibits a very high intrinsic GTPase hydrolysis rate. Involved in the addition of a carboxymethylaminomethyl (cmnm) group at the wobble position (U34) of certain tRNAs, forming tRNA-cmnm(5)s(2)U34. This chain is tRNA modification GTPase MnmE, found in Staphylococcus epidermidis (strain ATCC 35984 / DSM 28319 / BCRC 17069 / CCUG 31568 / BM 3577 / RP62A).